The following is a 170-amino-acid chain: APRG1 tumor suppressor candidate (170 aa).

A helical membrane pass occupies residues 150 to 170 (IALALAGPGAILILELSWFLG).

In terms of tissue distribution, expressed at high levels in the pancreas and placenta. As to expression, expressed at high levels in the kidney.

It localises to the membrane. The sequence is that of APRG1 tumor suppressor candidate from Homo sapiens (Human).